The chain runs to 313 residues: WD repeat-containing protein 82-B (313 aa).

WD repeat units follow at residues 19-58 (ENSD…PKRT), 105-144 (GHSK…CQGL), 146-184 (HLQG…KGPF), 192-231 (DRTC…VMHT), 236-276 (NNSK…KVAV), and 280-313 (KHTG…TIDD).

The protein belongs to the WD repeat SWD2 family. In terms of assembly, component of the SET1/COMPASS complex. Component of the PNUTS-PP1 phosphatase complex.

The protein resides in the nucleus. It localises to the chromosome. It is found in the cytoplasm. In terms of biological role, regulatory component of the SET1/COMPASS complex implicated in the tethering of this complex to transcriptional start sites of active genes. Facilitates histone H3 'Lys-4' methylation (H3K4me) via recruitment of the SETD1A or SETD1B to the 'Ser-5' phosphorylated C-terminal domain (CTD) of RNA polymerase II large subunit (POLR2A). Component of the PNUTS-PP1 protein phosphatase complex, a protein phosphatase 1 (PP1) complex that promotes RNA polymerase II transcription pause-release, allowing transcription elongation. This Xenopus laevis (African clawed frog) protein is WD repeat-containing protein 82-B (wdr82-b).